Reading from the N-terminus, the 195-residue chain is Nicotinamide riboside kinase 1 (195 aa).

G10–T18 is a binding site for ATP. 2 residues coordinate Mg(2+): T17 and D36. D36 serves as the catalytic Proton acceptor. Substrate is bound by residues D36–F39 and Y55–D56. Position 128 (R128) interacts with ATP. Substrate is bound by residues R129 and Y134–E135. ATP-binding positions include R132–Y134 and R172–E174.

This sequence belongs to the uridine kinase family. NRK subfamily. As to quaternary structure, monomer.

The enzyme catalyses beta-nicotinamide D-riboside + ATP = beta-nicotinamide D-ribonucleotide + ADP + H(+). It catalyses the reaction beta-D-ribosylnicotinate + ATP = nicotinate beta-D-ribonucleotide + ADP + H(+). It functions in the pathway cofactor biosynthesis; NAD(+) biosynthesis. Catalyzes the phosphorylation of nicotinamide riboside (NR) and nicotinic acid riboside (NaR) to form nicotinamide mononucleotide (NMN) and nicotinic acid mononucleotide (NaMN). The polypeptide is Nicotinamide riboside kinase 1 (Nmrk1) (Mus musculus (Mouse)).